The following is a 332-amino-acid chain: RNA polymerase principal sigma factor HrdD (332 aa).

The segment covering 1–11 (MATRAVARRKS) has biased composition (basic residues). The tract at residues 1–25 (MATRAVARRKSAAGETSGSATSVRA) is disordered. Low complexity predominate over residues 13–22 (AGETSGSATS). A Polymerase core binding motif is present at residues 124–137 (DLIQEGNAGLVRAV). Positions 294 to 313 (LTEVGKEHGLTRERIRQIEK) form a DNA-binding region, H-T-H motif.

The protein belongs to the sigma-70 factor family. As to quaternary structure, interacts transiently with the RNA polymerase catalytic core.

Functionally, sigma factors are initiation factors that promote the attachment of RNA polymerase to specific initiation sites and are then released. This Streptomyces coelicolor (strain ATCC BAA-471 / A3(2) / M145) protein is RNA polymerase principal sigma factor HrdD (hrdD).